The chain runs to 481 residues: GDP-fucose protein O-fucosyltransferase 3 (481 aa).

The Cytoplasmic segment spans residues 1-8 (MVRFQRRK). Residues 9–31 (LLASCLCVTATVFLMVTLQVVVE) traverse the membrane as a helical; Signal-anchor for type II membrane protein segment. Residues 32–481 (LGKFERKKLK…EEFWALVFKD (450 aa)) are Lumenal-facing. 3 N-linked (GlcNAc...) asparagine glycosylation sites follow: Asn-110, Asn-168, and Asn-318. A disulfide bond links Cys-389 and Cys-392. An N-linked (GlcNAc...) asparagine glycan is attached at Asn-468.

It belongs to the glycosyltransferase 10 family. In terms of tissue distribution, widely expressed, with a higher expression in liver and thymus.

It is found in the endoplasmic reticulum membrane. The enzyme catalyses L-threonyl-[protein] + GDP-beta-L-fucose = 3-O-(alpha-L-fucosyl)-L-threonyl-[protein] + GDP + H(+). The catalysed reaction is L-seryl-[protein] + GDP-beta-L-fucose = 3-O-(alpha-L-fucosyl)-L-seryl-[protein] + GDP + H(+). It functions in the pathway protein modification; protein glycosylation. In terms of biological role, protein O-fucosyltransferase that specifically catalyzes O-fucosylation of serine or threonine residues in EMI domains of target proteins, such as MMRN1, MMRN2 and EMID1. Attaches fucose through an O-glycosidic linkage. O-fucosylation of EMI domain-containing proteins may be required for facilitating protein folding and secretion. May also show alpha-(1,3)-fucosyltransferase activity toward the innermost N-acetyl glucosamine (GlcNAc) residue in biantennary N-glycan acceptors. However, this was tested with a library of synthetic substrates and this activity is unsure in vivo. May be involved in biosynthesis of Lewis X-carrying biantennary N-glycans that regulate neuron stem cell self-renewal during brain development. The chain is GDP-fucose protein O-fucosyltransferase 3 from Mus musculus (Mouse).